The following is a 350-amino-acid chain: HTH-type DNA-binding transcriptional activator EutR (350 aa).

Positions 243–344 (SRAREYVLEN…AEKPSLTLHQ (102 aa)) constitute an HTH araC/xylS-type domain. 2 DNA-binding regions (H-T-H motif) span residues 260-281 (LDLC…HAIL) and 311-334 (VKDA…QQLF).

The protein operates within amine and polyamine degradation; ethanolamine degradation. Its function is as follows. Activates the transcription of the eut operon, allowing utilization of ethanolamine (EA). Positively regulates its own transcription. Probably binds EA and vitamin B12 as effectors. Competes with ethanolamine ammonia-lysase (EAL, the first enzyme in the EA degradation pathway) for adenosylcobalamin. Ethanolamine-associated signaling mediated via this protein, but not EA degradation, impacts S.typhimurium survival within macrophages. Binds the promoter of ssrB and eutS in vitro; in mouse infection models binding to ssrB probably induces all 4 operons of pathogenicity island SPI-2. Expression of the eut operon allows this bacteria to use ethanolamine (EA) as a carbon, nitrogen and energy source. It relies on cobalamin (vitamin B12) both as a cofactor for the ethanolamine ammonia-lyase (EAL) activity and to induce the operon. EA enhances bacterial survival in macrophages in a concentration-dependent manner, suggesting it is an important nutrient in infection. This Salmonella typhimurium (strain LT2 / SGSC1412 / ATCC 700720) protein is HTH-type DNA-binding transcriptional activator EutR.